Here is an 85-residue protein sequence, read N- to C-terminus: SFQETRRVLTKAAFENHIDWLKGLKENVIIGRLIPAGTGFKQFYLYEYTKKNCEENIISLDPYNFEDNIIYKILTNQLEQNKRLN.

Belongs to the RNA polymerase beta' chain family. RpoC2 subfamily. In terms of assembly, in plastids the minimal PEP RNA polymerase catalytic core is composed of four subunits: alpha, beta, beta', and beta''. When a (nuclear-encoded) sigma factor is associated with the core the holoenzyme is formed, which can initiate transcription.

Its subcellular location is the plastid. The protein resides in the chloroplast. The enzyme catalyses RNA(n) + a ribonucleoside 5'-triphosphate = RNA(n+1) + diphosphate. Its function is as follows. DNA-dependent RNA polymerase catalyzes the transcription of DNA into RNA using the four ribonucleoside triphosphates as substrates. The polypeptide is DNA-directed RNA polymerase subunit beta'' (rpoC2) (Galdieria sulphuraria (Red alga)).